A 142-amino-acid polypeptide reads, in one-letter code: Large ribosomal subunit protein uL11 (142 aa).

It belongs to the universal ribosomal protein uL11 family. In terms of assembly, part of the ribosomal stalk of the 50S ribosomal subunit. Interacts with L10 and the large rRNA to form the base of the stalk. L10 forms an elongated spine to which L12 dimers bind in a sequential fashion forming a multimeric L10(L12)X complex. In terms of processing, one or more lysine residues are methylated.

Its function is as follows. Forms part of the ribosomal stalk which helps the ribosome interact with GTP-bound translation factors. The chain is Large ribosomal subunit protein uL11 from Mesorhizobium japonicum (strain LMG 29417 / CECT 9101 / MAFF 303099) (Mesorhizobium loti (strain MAFF 303099)).